A 115-amino-acid polypeptide reads, in one-letter code: Superoxide reductase (115 aa).

6 residues coordinate Fe cation: E14, H16, H41, H47, C102, and H105.

Belongs to the desulfoferrodoxin family. In terms of assembly, homotetramer. It depends on Fe cation as a cofactor.

It carries out the reaction reduced [rubredoxin] + superoxide + 2 H(+) = oxidized [rubredoxin] + H2O2. Functionally, uses electrons from reduced NADP, by way of rubredoxin and an oxidoreductase, to catalyze the reduction of superoxide to hydrogen peroxide. In Thermococcus kodakarensis (strain ATCC BAA-918 / JCM 12380 / KOD1) (Pyrococcus kodakaraensis (strain KOD1)), this protein is Superoxide reductase (sorA).